Here is a 318-residue protein sequence, read N- to C-terminus: Homoserine kinase (318 aa).

Residue 97 to 107 (PIGSGLGSSAC) coordinates ATP.

Belongs to the GHMP kinase family. Homoserine kinase subfamily.

Its subcellular location is the cytoplasm. The enzyme catalyses L-homoserine + ATP = O-phospho-L-homoserine + ADP + H(+). Its pathway is amino-acid biosynthesis; L-threonine biosynthesis; L-threonine from L-aspartate: step 4/5. Its function is as follows. Catalyzes the ATP-dependent phosphorylation of L-homoserine to L-homoserine phosphate. The polypeptide is Homoserine kinase (Vibrio vulnificus (strain CMCP6)).